The chain runs to 259 residues: Probable ABC transporter arginine-binding protein ArtJ (259 aa).

A signal peptide spans 1–25 (MIKQIGRFFRAFIFIMPLSLTSCES). 7 residues coordinate L-arginine: Asn-38, Glu-45, Ala-96, Gly-97, Ser-99, Arg-104, and Phe-149.

The protein belongs to the bacterial solute-binding protein 3 family.

Its subcellular location is the secreted. It localises to the cell surface. Functionally, probably part of an ABC transporter complex involved in arginine transport. Binds arginine. Interacts with host epithelial cells, suggesting a role in host-cell adhesion during infection. The polypeptide is Probable ABC transporter arginine-binding protein ArtJ (Chlamydia pneumoniae (Chlamydophila pneumoniae)).